Reading from the N-terminus, the 741-residue chain is D-(-)-3-hydroxybutyrate oligomer hydrolase (741 aa).

The signal sequence occupies residues 1–23 (MKTIQGKSPGRWYSRGMLLAAMA). The tract at residues 45 to 68 (NGNAGGNGNNNGNNNGNTVSNTKP) is disordered. The active-site Charge relay system is the S338.

The protein belongs to the D-(-)-3-hydroxybutyrate oligomer hydrolase family.

The protein resides in the secreted. The catalysed reaction is (3R)-hydroxybutanoate dimer + H2O = 2 (R)-3-hydroxybutanoate + H(+). It participates in lipid metabolism; butanoate metabolism. Its function is as follows. Participates in the degradation of poly-3-hydroxybutyrate (PHB). It works downstream of poly(3-hydroxybutyrate) depolymerase, hydrolyzing D(-)-3-hydroxybutyrate oligomers of various length (3HB-oligomers) into 3HB-monomers. This Ralstonia pickettii (Burkholderia pickettii) protein is D-(-)-3-hydroxybutyrate oligomer hydrolase.